Here is a 362-residue protein sequence, read N- to C-terminus: Molybdenum import ATP-binding protein ModC (362 aa).

The ABC transporter domain maps to Val-2–Asp-236. Residue Gly-34–Thr-41 coordinates ATP. A Mop domain is found at His-297–Ala-362.

This sequence belongs to the ABC transporter superfamily. Molybdate importer (TC 3.A.1.8) family. In terms of assembly, the complex is composed of two ATP-binding proteins (ModC), two transmembrane proteins (ModB) and a solute-binding protein (ModA).

It is found in the cell inner membrane. It catalyses the reaction molybdate(out) + ATP + H2O = molybdate(in) + ADP + phosphate + H(+). Its function is as follows. Part of the ABC transporter complex ModABC involved in molybdenum import. Responsible for energy coupling to the transport system. In Pseudomonas syringae pv. tomato (strain ATCC BAA-871 / DC3000), this protein is Molybdenum import ATP-binding protein ModC.